The sequence spans 213 residues: MDSKKGILVAIGGGSCSGKTTIADMIYQLLRKKLKVAILPQDNYYKPYKNKSMAQRKAINFDHPDAFDWKLLWSHLDNLLMGKTVAVPMYDYVNYTRKKETIEIGPLNVVILEGLMPWFDERIAKLCKLKIFVEATGEERLIRRIERDWERGRDVASIIKQWREAVSPMYEIFVEKMKQKADLIIPWSERHEVSTNVLDFAIEHLFRKHVDPN.

13 to 20 (GGSCSGKT) provides a ligand contact to ATP.

Belongs to the uridine kinase family.

Its subcellular location is the cytoplasm. It catalyses the reaction uridine + ATP = UMP + ADP + H(+). The catalysed reaction is cytidine + ATP = CMP + ADP + H(+). It functions in the pathway pyrimidine metabolism; CTP biosynthesis via salvage pathway; CTP from cytidine: step 1/3. The protein operates within pyrimidine metabolism; UMP biosynthesis via salvage pathway; UMP from uridine: step 1/1. This chain is Uridine kinase (udk), found in Mycoplasma pneumoniae (strain ATCC 29342 / M129 / Subtype 1) (Mycoplasmoides pneumoniae).